A 231-amino-acid chain; its full sequence is MENGAARTVPAVIVAIDGPSGTGKSSTSKAVAAKLGLSYLDTGAQYRAITWWMVSNGIDITDPTAIAAVAGKPEIISGTDPSAPTITVDGTDVAAPIRTQEVTSKVSAVSAVPEVRTRITELQRSLATSAENGIVVEGRDIGTTVLPDADLKIFLTASPEARAARRSGELKGADVNSTREALLKRDAADSSRKTSPLAKADDAVEVDTSDLTLQQVIECVVTLVEEKRAAK.

Residue 18–26 participates in ATP binding; it reads GPSGTGKSS.

It belongs to the cytidylate kinase family. Type 1 subfamily.

The protein localises to the cytoplasm. It carries out the reaction CMP + ATP = CDP + ADP. The catalysed reaction is dCMP + ATP = dCDP + ADP. The protein is Cytidylate kinase of Streptomyces avermitilis (strain ATCC 31267 / DSM 46492 / JCM 5070 / NBRC 14893 / NCIMB 12804 / NRRL 8165 / MA-4680).